Reading from the N-terminus, the 110-residue chain is Phosphoribosyl-ATP pyrophosphatase (110 aa).

It belongs to the PRA-PH family.

The protein resides in the cytoplasm. The enzyme catalyses 1-(5-phospho-beta-D-ribosyl)-ATP + H2O = 1-(5-phospho-beta-D-ribosyl)-5'-AMP + diphosphate + H(+). It functions in the pathway amino-acid biosynthesis; L-histidine biosynthesis; L-histidine from 5-phospho-alpha-D-ribose 1-diphosphate: step 2/9. This is Phosphoribosyl-ATP pyrophosphatase from Pseudomonas savastanoi pv. phaseolicola (strain 1448A / Race 6) (Pseudomonas syringae pv. phaseolicola (strain 1448A / Race 6)).